We begin with the raw amino-acid sequence, 396 residues long: Methylthioribose kinase (396 aa).

Residues asparagine 44, lysine 61, and 115-117 (EDL) each bind ATP. Aspartate 233 contacts substrate. 250–252 (DPE) contributes to the ATP binding site. Arginine 340 contributes to the substrate binding site.

Belongs to the methylthioribose kinase family. As to quaternary structure, homodimer.

It catalyses the reaction 5-(methylsulfanyl)-D-ribose + ATP = 5-(methylsulfanyl)-alpha-D-ribose 1-phosphate + ADP + H(+). It participates in amino-acid biosynthesis; L-methionine biosynthesis via salvage pathway; S-methyl-5-thio-alpha-D-ribose 1-phosphate from S-methyl-5'-thioadenosine (hydrolase route): step 2/2. Its function is as follows. Catalyzes the phosphorylation of methylthioribose into methylthioribose-1-phosphate. The chain is Methylthioribose kinase from Geobacillus thermodenitrificans (strain NG80-2).